We begin with the raw amino-acid sequence, 1029 residues long: Protein SUPPRESSOR OF PHYA-105 1 (1029 aa).

The disordered stretch occupies residues 42–69; it reads SETANSDCPGSSAHRNVDLTKPPPPEEA. The region spanning 188–529 is the Protein kinase domain; it reads VQMKTPVSSS…ARDILKSELI (342 aa). ATP is bound by residues 194 to 202 and Lys216; that span reads VSSSNFSQL. A disordered region spans residues 213 to 269; sequence VVGKNQETPPEFVSDQDLGSKEKKLDISKSPTPHDVLPLKSSPKGNGMVSHGDGNHS. Over residues 230–239 the composition is skewed to basic and acidic residues; that stretch reads LGSKEKKLDI. Asp316 acts as the Proton acceptor in catalysis. Positions 347-392 are disordered; that stretch reads EDLNRRRPVVEESSSGGRDSKKRKMDLHLNSPGNQLQATSTGRPFK. The span at 377 to 388 shows a compositional bias: polar residues; it reads SPGNQLQATSTG. Residues 557 to 589 are a coiled coil; that stretch reads VQKKKKASKLLQDIQTLEDDIKEAERRYSSNVS. Positions 653–679 are disordered; the sequence is ARSDKTLKDRDRCSENQNENQDMSTKG. Over residues 654-666 the composition is skewed to basic and acidic residues; that stretch reads RSDKTLKDRDRCS. The span at 667-679 shows a compositional bias: polar residues; that stretch reads ENQNENQDMSTKG. WD repeat units lie at residues 714 to 753, 763 to 803, 806 to 846, 848 to 888, 892 to 930, 932 to 971, and 997 to 1029; these read NSAS…NESV, VNKS…GFSQ, EHQK…SLGT, WSPA…TPWC, GHEK…SSGL, PGAC…YSYY, and DNGQ…LKLV. The DWD box motif lies at 866-881; it reads LAFGSADYKVYCYDLR.

Interacts with CO, COP1, HFR1, HY5 and PHYA. Light induces dissociation of the SPA1/COP1 complex. Binds to CRY1 in response to blue light, this interaction prevents SPA1/COP1 complex formation but stimulate CRY2/COP1 complex, and thus avoid COP1-dependent degradation of the transcription factor HY5 by the proteasome and promotes hypocotyl elongation.

The protein localises to the nucleus speckle. Its subcellular location is the nucleus. The protein resides in the PML body. Functionally, controls normal photoperiodic flowering and regulates circadian rhythms. Required for suppression of photomorphogenesis in dark-grown seedlings and for normal elongation growth of adult plants. Integral component of the COP1/SPA E3 ubiquitin-protein ligase complex. Involved in HY5, HFR1, LAF1 and CO degradation. The sequence is that of Protein SUPPRESSOR OF PHYA-105 1 (SPA1) from Arabidopsis thaliana (Mouse-ear cress).